The primary structure comprises 462 residues: Gamma-aminobutyric acid receptor subunit alpha-5 (462 aa).

An N-terminal signal peptide occupies residues 1–31; the sequence is MDNGMFSSFIMIKNLLLFCISMNLASHFGFS. At 32–260 the chain is on the extracellular side; it reads QMPTSSVKAE…FHLKRKIGYF (229 aa). N-linked (GlcNAc...) asparagine glycosylation is present at Asn45. Position 101 (Arg101) interacts with 4-aminobutanoate. N-linked (GlcNAc...) asparagine glycosylation is present at Asn145. Thr164 provides a ligand contact to 4-aminobutanoate. Cys173 and Cys187 are disulfide-bonded. N-linked (GlcNAc...) asparagine glycosylation is found at Asn207 and Asn236. The next 3 membrane-spanning stretches (helical) occupy residues 261-281, 287-308, and 319-340; these read VIQTYLPCIMTVILSQVSFWL, PARTVFGVTTVLTMTTLSISAR, and AMDWFIAVCYAFVFSALIEFAT. Residues 341–427 are Cytoplasmic-facing; that stretch reads VNYFTKRGWA…TYNSISKIDK (87 aa). Lys355 is covalently cross-linked (Glycyl lysine isopeptide (Lys-Gly) (interchain with G-Cter in ubiquitin)). The tract at residues 375-412 is disordered; that stretch reads TNAYTTGKMTHPPNIPKEQTPAGTTNASSASVKPEDKA. Over residues 395–405 the composition is skewed to polar residues; the sequence is PAGTTNASSAS. Residues 428-448 traverse the membrane as a helical segment; it reads MSRIIFPLLFGTFNLVYWATY.

The protein belongs to the ligand-gated ion channel (TC 1.A.9) family. Gamma-aminobutyric acid receptor (TC 1.A.9.5) subfamily. GABRA5 sub-subfamily. Heteropentamer, formed by a combination of alpha (GABRA1-6), beta (GABRB1-3), gamma (GABRG1-3), delta (GABRD), epsilon (GABRE), rho (GABRR1-3), pi (GABRP) and theta (GABRQ) chains, each subunit exhibiting distinct physiological and pharmacological properties.

It is found in the postsynaptic cell membrane. The protein localises to the cell membrane. The catalysed reaction is chloride(in) = chloride(out). Functionally, alpha subunit of the heteropentameric ligand-gated chloride channel gated by gamma-aminobutyric acid (GABA), a major inhibitory neurotransmitter in the brain. GABA-gated chloride channels, also named GABA(A) receptors (GABAAR), consist of five subunits arranged around a central pore and contain GABA active binding site(s) located at the alpha and beta subunit interface(s). When activated by GABA, GABAARs selectively allow the flow of chloride anions across the cell membrane down their electrochemical gradient. GABAARs containing alpha-5/GABRA5 subunits are mainly extrasynaptic and contribute to the tonic GABAergic inhibition in the hippocampus. Extrasynaptic alpha-5-containing GABAARs in CA1 pyramidal neurons play a role in learning and memory processes. The polypeptide is Gamma-aminobutyric acid receptor subunit alpha-5 (GABRA5) (Bos taurus (Bovine)).